The following is a 259-amino-acid chain: MAKKKPVEKNGLVYKEFQKQVSNLKKAGLIPKTLDVRKVKPTKHYKGLVSKYKDVATGGAKLAAIPNPAVIETLEARGESIIKKGGKAYLKARQQINQRGQIVNPFTVRVTKRGEVVRRYRKTTPEGKPVYITQRELPIKFENMEQWLTELKAAGFQLQPGEQIYFTFNGNYSRRTYTSFDEAFNKFMTYDIIIDAVAGKLKVEDEADLVKSVGFQRISGPEAKAYNRNRIVLPEMQFSQAAKKKYKRRQKRGYGSKGV.

O-(5'-phospho-DNA)-tyrosine is present on Tyr-190. The short motif at 243–259 is the Nuclear localization signal element; sequence KKKYKRRQKRGYGSKGV.

The protein belongs to the tectivirus DNA terminal protein family. As to quaternary structure, heterodimer with viral polymerase. Binds to ssDNA.

The protein localises to the virion. It is found in the host nucleus. Functionally, acts as a primer for viral genomic replication. DNA terminal protein is covalently linked to the 5'-ends of both strands of the genome through a phosphodiester bond between the beta-hydroxyl group of a tyrosine residue and the 5'-phosphate of the terminal deoxyadenylate. This protein is essential for DNA replication and is involved in the priming of DNA elongation. In Enterobacteria phage PRD1 (Bacteriophage PRD1), this protein is DNA terminal protein (VIII).